The primary structure comprises 30 residues: Varv peptide B (30 aa).

A cross-link (cyclopeptide (Gly-Asn)) is located at residues 1 to 30 (GLPVCGETCFGGTCNTPGCSCDPWPMCSRN). Intrachain disulfides connect cysteine 5–cysteine 19, cysteine 9–cysteine 21, and cysteine 14–cysteine 27.

This is a cyclic peptide.

Probably participates in a plant defense mechanism. In Viola arvensis (European field pansy), this protein is Varv peptide B.